The chain runs to 337 residues: DNA-directed RNA polymerase subunit alpha (337 aa).

The alpha N-terminal domain (alpha-NTD) stretch occupies residues 1–233; it reads MVREKVTVST…DLFIPFLHIE (233 aa). The tract at residues 265-337 is alpha C-terminal domain (alpha-CTD); sequence KKIALKSIFI…FVIDLAKNEF (73 aa).

The protein belongs to the RNA polymerase alpha chain family. In plastids the minimal PEP RNA polymerase catalytic core is composed of four subunits: alpha, beta, beta', and beta''. When a (nuclear-encoded) sigma factor is associated with the core the holoenzyme is formed, which can initiate transcription.

The protein localises to the plastid. Its subcellular location is the chloroplast. It catalyses the reaction RNA(n) + a ribonucleoside 5'-triphosphate = RNA(n+1) + diphosphate. Functionally, DNA-dependent RNA polymerase catalyzes the transcription of DNA into RNA using the four ribonucleoside triphosphates as substrates. The protein is DNA-directed RNA polymerase subunit alpha of Nicotiana tomentosiformis (Tobacco).